A 431-amino-acid chain; its full sequence is Glutamate-1-semialdehyde 2,1-aminomutase 2 (431 aa).

Residue Lys-268 is modified to N6-(pyridoxal phosphate)lysine.

The protein belongs to the class-III pyridoxal-phosphate-dependent aminotransferase family. HemL subfamily. In terms of assembly, homodimer. Requires pyridoxal 5'-phosphate as cofactor.

It is found in the cytoplasm. It catalyses the reaction (S)-4-amino-5-oxopentanoate = 5-aminolevulinate. It participates in porphyrin-containing compound metabolism; protoporphyrin-IX biosynthesis; 5-aminolevulinate from L-glutamyl-tRNA(Glu): step 2/2. This is Glutamate-1-semialdehyde 2,1-aminomutase 2 from Bacillus licheniformis (strain ATCC 14580 / DSM 13 / JCM 2505 / CCUG 7422 / NBRC 12200 / NCIMB 9375 / NCTC 10341 / NRRL NRS-1264 / Gibson 46).